A 332-amino-acid chain; its full sequence is Twinfilin-1 (332 aa).

The ADF-H 1 domain maps to 5 to 132; sequence SGIVAEQALL…VDLKNFDSAR (128 aa). A phosphoserine mark is found at serine 167 and serine 172. The ADF-H 2 domain maps to 173-300; the sequence is PLSLTFRVNS…DKSLLMATNK (128 aa). Positions 301–332 are disordered; sequence EDSLDHGSNPDLPNKSNLKFNKPKGPLRKRRT. Basic residues predominate over residues 321 to 332; that stretch reads NKPKGPLRKRRT.

It belongs to the actin-binding proteins ADF family. Twinfilin subfamily. In terms of assembly, interacts with G-actin; ADP-actin form.

Its subcellular location is the cytoplasm. It is found in the cytoskeleton. In terms of biological role, actin-binding protein involved in motile and morphological processes. Inhibits actin polymerization, likely by sequestering G-actin. Prevents actin filament assembly by forming a 1:1 complex with actin monomers, and inhibits the nucleotide exchange reaction of actin monomers. The chain is Twinfilin-1 (TWF1) from Saccharomyces cerevisiae (strain ATCC 204508 / S288c) (Baker's yeast).